The sequence spans 878 residues: MTESFPSTSASSQSSARYDPIELETRWQKEWLRQGLDRTPVAETNQKRFYALSMFPYPSGKLHMGHVRNYVITDVIARVQRMRGDAVLHPMGWDAFGLPAENAAIARNVDPGDWTDQNIAQMRAQLDRLGLSIDWDRQQATCHQDYYRWTQWLFLELFAGGLAYQKEATVNWDPVDKTVLANEQVDGEGRSWRSGALVEQRQLKQWFLRITDYADALIDDLDELTGWPERVRTMQANWIGRSHGAEIKFRVAGVANSIITVFTTRPDTLHGASYVVLAPEHPLVESLTSPEQRLAVTAFCDLISQLSVKDRTAEDQPKRGVPIGAQVINPVNGESLPVWIADYVLADYGSGAVMGVPAHDERDFIFARSHELPIRIVVQLPDTDEHHNDGQAWTGAGVLVNSGAFDGLSTEEAKVAITTHGASEGWAQSKVQYRLRDWLISRQRYWGCPIPIIHCASCGIVPVPQEDLPVTLPRDIDLSGKGGSPIAQEQAWVEVKCPICGEKAHRETDTMDTFMCSSWYYLRFADPLNSQRPFDKDIVDEWLPVDQYVGGIEHAILHLLYARFFTKALHDRNLIGFKEPFNRLLTQGMVQGLTYRNAKNGSYISPELVSDDSDPRDPESGDRLEVLFEKMSKSKYNGVDPAVVIDRYGADTARMFILFKAPPEKDLEWDDADVEGQFRFLQRLIRLIDSFAWPKTDGENASISSANLIIDSADLSEEEINMRRATHKAIEAITEDLSGDIQLNTAISELMKLSNSLSGKLDKVRNEVAAEALSVLVRLMAPFAPHLAEEFWLKLHGHGSIHQQSWPVIDPSALVLETIELVIQVKGKVRGKIQVPANADKKTLEELALNSDIAVKWLEGQSPRRIIIVPGKLVNLVP.

The short motif at Pro56 to His66 is the 'HIGH' region element. Residues Lys630 to Ser634 carry the 'KMSKS' region motif. Position 633 (Lys633) interacts with ATP.

Belongs to the class-I aminoacyl-tRNA synthetase family.

The protein localises to the cytoplasm. It catalyses the reaction tRNA(Leu) + L-leucine + ATP = L-leucyl-tRNA(Leu) + AMP + diphosphate. The protein is Leucine--tRNA ligase of Prochlorococcus marinus (strain MIT 9313).